The sequence spans 439 residues: Trehalose-phosphatase (439 aa).

Mg(2+) is bound by residues Asp-163 and Asp-165. The Proton donor/acceptor role is filled by Asp-165. Position 282 to 284 (282 to 284) interacts with substrate; the sequence is QRK. Asp-373 is a Mg(2+) binding site.

Belongs to the gob-1 trehalose phosphatase family. It depends on Mg(2+) as a cofactor. Ubiquitously expressed. Strong expression in intestine.

It catalyses the reaction alpha,alpha-trehalose 6-phosphate + H2O = alpha,alpha-trehalose + phosphate. Catalyzes the hydrolysis of trehalose 6-phosphate to trehalose and phosphate; prevents the accumulation of toxic levels of trehalose 6-phosphate. This is Trehalose-phosphatase from Caenorhabditis elegans.